Consider the following 181-residue polypeptide: Cyclic phosphodiesterase (181 aa).

Histidine 42 (proton donor/acceptor) is an active-site residue. Threonine 44 is a substrate binding site. Cystine bridges form between cysteine 64-cysteine 177 and cysteine 104-cysteine 110. Histidine 119 functions as the Proton donor/acceptor in the catalytic mechanism. Positions 121 and 124 each coordinate substrate.

This sequence belongs to the 2H phosphoesterase superfamily. CPD1 family. In terms of tissue distribution, expressed in leaves, stems, roots, floral buds and germinating seeds.

It is found in the cytoplasm. The catalysed reaction is ADP-alpha-D-ribose 1'',2''-cyclic phosphate + H2O = ADP-alpha-D-ribose 1''-phosphate + H(+). It carries out the reaction 2',3'-cyclophospho-AMP + H2O = adenosine 2'-phosphate + H(+). The enzyme catalyses 2',3'-cyclophospho-GMP + H2O = guanosine 2'-phosphate + H(+). It catalyses the reaction 2',3'-cyclophospho-UMP + H2O = uridine 2'-phosphate + H(+). The catalysed reaction is 2',3'-cyclophospho-CMP + H2O = cytidine 2'-phosphate + H(+). With respect to regulation, inhibited by Cu(2+) and Zn(2+) at 0.5 mM by 93 and 87% respectively. Not inhibited by Ca(2+), Mg(2+), Co(2+), Ni(2+), and EDTA at 0.5 mM. In terms of biological role, hydrolyzes ADP-ribose 1'',2''-cyclic phosphate (Appr&gt;1) that is produced during tRNA splicing into ADP-ribose 1''-phosphate (Appr-1''p). Also acts on nucleoside 2',3'-cyclic phosphates. This is Cyclic phosphodiesterase from Arabidopsis thaliana (Mouse-ear cress).